The sequence spans 511 residues: Glutamate/gamma-aminobutyrate antiporter (511 aa).

Over methionine 1 to threonine 14 the chain is Cytoplasmic. The chain crosses the membrane as a helical span at residues leucine 15–phenylalanine 35. Topologically, residues alanine 36 to serine 41 are periplasmic. Residues leucine 42–alanine 62 form a helical membrane-spanning segment. Residues glutamate 63–serine 93 are Cytoplasmic-facing. Residues phenylalanine 94 to leucine 114 form a helical membrane-spanning segment. The Periplasmic segment spans residues serine 115–proline 127. Residues isoleucine 128 to glycine 148 form a helical membrane-spanning segment. Over threonine 149 to lysine 157 the chain is Cytoplasmic. The chain crosses the membrane as a helical span at residues valine 158–tyrosine 178. Residues leucine 179 to lysine 200 are Periplasmic-facing. A helical transmembrane segment spans residues valine 201–alanine 221. The Cytoplasmic segment spans residues threonine 222 to leucine 239. A helical transmembrane segment spans residues leucine 240–isoleucine 260. Topologically, residues proline 261–arginine 291 are periplasmic. The helical transmembrane segment at valine 292 to proline 312 threads the bilayer. Residues serine 313–asparagine 335 are Cytoplasmic-facing. The chain crosses the membrane as a helical span at residues glycine 336–leucine 356. Residues threonine 357 to serine 366 lie on the Periplasmic side of the membrane. A helical transmembrane segment spans residues phenylalanine 367–isoleucine 387. The Cytoplasmic segment spans residues glycine 388–lysine 412. The chain crosses the membrane as a helical span at residues leucine 413–proline 433. Over proline 434–tyrosine 445 the chain is Periplasmic. A helical transmembrane segment spans residues valine 446–valine 466. Residues histidine 467 to histidine 511 lie on the Cytoplasmic side of the membrane.

This sequence belongs to the amino acid-polyamine-organocation (APC) superfamily. Glutamate:GABA antiporter (GGA) (TC 2.A.3.7) family.

Its subcellular location is the cell inner membrane. The catalysed reaction is 4-aminobutanoate(in) + L-glutamate(out) = 4-aminobutanoate(out) + L-glutamate(in). Shows pH-dependent activity. The glutamate analog L-trans-pyrrolidine-2,4-dicarboxylic acid (L-PDC) blocks the uptake of glutamate by selective inhibition. Involved in glutaminase-dependent acid resistance. Exchanges extracellular glutamate (Glu) for intracellular gamma-aminobutyric acid (GABA) under acidic conditions. The ability to survive the extremely acidic conditions of the stomach is essential for successful colonization of the host by commensal and pathogenic bacteria. The chain is Glutamate/gamma-aminobutyrate antiporter (gadC) from Escherichia coli O157:H7.